A 755-amino-acid chain; its full sequence is LIM domain and actin-binding protein 1 (755 aa).

Met1 is subject to N-acetylmethionine. Ser15 bears the Phosphoserine mark. Positions 43–56 are enriched in basic and acidic residues; that stretch reads KAAEEANMERKKNN. The tract at residues 43–151 is disordered; that stretch reads KAAEEANMER…YPRSEDSHDF (109 aa). Residues 88-97 are compositionally biased toward polar residues; it reads DSLPNSSSDG. Ser132 is subject to Phosphoserine. Positions 164-166 match the Required for interaction with NPC1L1 motif; it reads CLG. Basic and acidic residues-rich tracts occupy residues 168 to 177 and 199 to 208; these read SRHEAEKPEM and MMFEKGEHSQ. Residues 168–226 form a disordered region; sequence SRHEAEKPEMSENTETSGKIEKYNVPLNRLKMMFEKGEHSQNKSPWTQGRNAGGRRLSE. Phosphoserine is present on residues Ser225, Ser230, and Ser242. The tract at residues 241 to 379 is disordered; sequence LSSSAFNSEK…ESSPSKTAKK (139 aa). The segment covering 249-258 has biased composition (basic and acidic residues); that stretch reads EKNESKRNLE. A Phosphoserine modification is found at Ser263. The segment covering 292-305 has biased composition (basic and acidic residues); sequence KPSESKTHKWEQKE. Polar residues predominate over residues 342–354; the sequence is CNSQGRSEAQQPI. Phosphoserine is present on residues Ser348, Ser360, Ser367, and Ser372. A compositionally biased stretch (polar residues) spans 363–375; that stretch reads ARTSSLPESSPSK. Residues 386–446 form the LIM zinc-binding domain; sequence ESCVECQKTV…KPHFNQLFKS (61 aa). Residue Lys437 is modified to N6-succinyllysine. Disordered stretches follow at residues 468 to 493 and 505 to 714; these read ENEE…GVED and SMEA…DTTT. Ser488 is subject to Phosphoserine. Residues 491–511 form a required for interaction with MYO5B region; it reads VEDAPIAKVGVLAASMEAKAS. Composition is skewed to basic and acidic residues over residues 512–526 and 555–566; these read SQRE…ETKK and WPPEDEVCKTEA. Over residues 599 to 611 the composition is skewed to low complexity; it reads SSVKSPKPLSPSL. Phosphoserine is present on residues Ser600, Ser603, Ser608, and Ser616. Basic and acidic residues-rich tracts occupy residues 638-653 and 662-673; these read RPSR…RWQS and EAPRGRDGRSFE. Residues Ser697, Ser722, and Ser737 each carry the phosphoserine modification.

Interacts with NPC1L1; bridges NPC1L1 with MYO5B. Interacts with MYO5B; bridges MYO5B with NPC1L1. Interacts with PXN; this complex stabilizes actin dynamics. Interacts with F-actin and G-actin. Interacts with LUZP1 (via C-terminus); both proteins restrict ciliation and may work together to regulate this process. Binds RAB40B (GTP-bound); interaction influences LIMA1 subcellular localization in lamellipodia during cell migration. Post-translationally, phosphorylation of the C-terminal region by MAPK1/MAPK3 reduces its association with F-actin and contributes to actin filament reorganization and enhanced cell motility. In terms of processing, ubiquitinated by the ECS(RAB40B) complex leading to its degradation. Expressed throughout the kidney, including renal cortex, medulla, and glomeruli. Expressed in glomeruli, tubular epithelial cells, and extraglomerular vascular endothelial cells (at protein level).

The protein localises to the cytoplasm. The protein resides in the cell junction. Its subcellular location is the focal adhesion. It is found in the cytoskeleton. It localises to the stress fiber. The protein localises to the cell membrane. The protein resides in the cell projection. Its subcellular location is the ruffle. It is found in the lamellipodium. Functionally, actin-binding protein involved in actin cytoskeleton regulation and dynamics. Increases the number and size of actin stress fibers and inhibits membrane ruffling. Inhibits actin filament depolymerization. Bundles actin filaments, delays filament nucleation and reduces formation of branched filaments. Acts as a negative regulator of primary cilium formation. Plays a role in cholesterol homeostasis. Influences plasma cholesterol levels through regulation of intestinal cholesterol absorption. May act as a scaffold protein by regulating NPC1L1 transportation, an essential protein for cholesterol absorption, to the plasma membrane by recruiting MYO5B to NPC1L1, and thus facilitates cholesterol uptake. The polypeptide is LIM domain and actin-binding protein 1 (Rattus norvegicus (Rat)).